The chain runs to 402 residues: Phosphoglycerate kinase (402 aa).

Substrate is bound by residues 24-26 (DFN), R40, 63-66 (HFGR), R122, and R155. ATP-binding positions include K206, G297, E328, and 358–361 (GGDS).

The protein belongs to the phosphoglycerate kinase family. In terms of assembly, monomer.

It localises to the cytoplasm. It carries out the reaction (2R)-3-phosphoglycerate + ATP = (2R)-3-phospho-glyceroyl phosphate + ADP. The protein operates within carbohydrate degradation; glycolysis; pyruvate from D-glyceraldehyde 3-phosphate: step 2/5. This chain is Phosphoglycerate kinase, found in Prochlorococcus marinus (strain MIT 9301).